Reading from the N-terminus, the 295-residue chain is Ribosomal protein L11 methyltransferase (295 aa).

S-adenosyl-L-methionine is bound by residues Thr150, Gly171, Asp193, and Asn232.

This sequence belongs to the methyltransferase superfamily. PrmA family.

The protein resides in the cytoplasm. The enzyme catalyses L-lysyl-[protein] + 3 S-adenosyl-L-methionine = N(6),N(6),N(6)-trimethyl-L-lysyl-[protein] + 3 S-adenosyl-L-homocysteine + 3 H(+). Its function is as follows. Methylates ribosomal protein L11. This is Ribosomal protein L11 methyltransferase from Methylobacillus flagellatus (strain ATCC 51484 / DSM 6875 / VKM B-1610 / KT).